The primary structure comprises 81 residues: UPF0349 protein SE_0633 (81 aa).

This sequence belongs to the UPF0349 family.

The chain is UPF0349 protein SE_0633 from Staphylococcus epidermidis (strain ATCC 12228 / FDA PCI 1200).